The chain runs to 363 residues: MSNEATVIKVTGQSVNENYDVVVGRGLLDTLPAKLGERVRRVLVIHPRALRLTGDTVRDELEAAGFTALTAEIPDAEEGKHIQVAAFCWQVLGQNDFTRSDAIVAVGGGAVTDLAGFVAATWLRGVKVIHMPTSLLGMVDASVGGKTGINTAEGKNLVGSFHPPAAVLADLDTLQTLPKNELISGMAEVIKCGFIADPAILDLVEKNTDAVMDPGSDVVRELIERAISVKADVVSQDLKESGLREILNYGHTLGHAIELVERYSWRHGAAVSVGMMFAAELSRSVGRLSDADADRHRTILESLGLPITYRRDRWQGLLDGMRRDKKSRGDLLRFVVLDGVAKPGILEVPDTSLLFAAYQEIAS.

NAD(+)-binding positions include Asp75–Lys80, Gly109–Asp113, Thr133–Ser134, Lys146, Lys155, and Thr173–Thr176. Zn(2+) contacts are provided by Glu188, His251, and His267.

This sequence belongs to the sugar phosphate cyclases superfamily. Dehydroquinate synthase family. Co(2+) is required as a cofactor. Requires Zn(2+) as cofactor. It depends on NAD(+) as a cofactor.

The protein resides in the cytoplasm. The enzyme catalyses 7-phospho-2-dehydro-3-deoxy-D-arabino-heptonate = 3-dehydroquinate + phosphate. It participates in metabolic intermediate biosynthesis; chorismate biosynthesis; chorismate from D-erythrose 4-phosphate and phosphoenolpyruvate: step 2/7. Its function is as follows. Catalyzes the conversion of 3-deoxy-D-arabino-heptulosonate 7-phosphate (DAHP) to dehydroquinate (DHQ). The protein is 3-dehydroquinate synthase of Paenarthrobacter aurescens (strain TC1).